The primary structure comprises 364 residues: Nucleosome assembly protein 1;2 (364 aa).

The stretch at 32-86 (VESIKNTLQGLAARHTDVLESLEPKVRKRVEVLREIQSQHDDLEAKFFEERAALE) forms a coiled coil. The short motif at 53 to 68 (LEPKVRKRVEVLREIQ) is the Nuclear export signal element. Positions 227–232 (KKKPKK) match the Nuclear localization signal motif. Disordered regions lie at residues 250–269 (FNFFSPPQVPDDDEEIDEDT) and 301–364 (GEAA…CKQQ). Acidic residues-rich tracts occupy residues 259–269 (PDDDEEIDEDT) and 304–340 (AQDEDFEGIMDDEDDDDEDDDDDEDEDDEDDDEDDED). Residue Cys361 is modified to Cysteine methyl ester. Cys361 carries S-farnesyl cysteine lipidation. Residues 362–364 (KQQ) constitute a propeptide, removed in mature form.

The protein belongs to the nucleosome assembly protein (NAP) family. As to quaternary structure, binds preferentially histone H1 in vitro. In terms of tissue distribution, highly expressed in tissues exhibiting active cell-division activities, such as root and shoot meristems and young flowers.

It is found in the nucleus. Its subcellular location is the cytoplasm. In terms of biological role, may modulate chromatin structure by regulation of nucleosome assembly/disassembly. This Oryza sativa subsp. indica (Rice) protein is Nucleosome assembly protein 1;2 (NAP1;2).